A 2245-amino-acid polypeptide reads, in one-letter code: Myosin-J heavy chain (2245 aa).

One can recognise a Myosin N-terminal SH3-like domain in the interval 25 to 77 (QEGAGVWIPDQELGWIGADVIEHSETSADQVLVRTEDDREVKIPLSKVFQKNP). Residues 81-821 (EGVDDLSFLS…QLASLEDMRL (741 aa)) form the Myosin motor domain. 174-181 (GESGAGKT) provides a ligand contact to ATP. Residues 646 to 672 (FTQSPGGHPQGNGGPTSSNTKGTSGSS) form a disordered region. Low complexity predominate over residues 660–672 (PTSSNTKGTSGSS). Positions 669–749 (SGSSSMKFLS…GFPTRRLLSE (81 aa)) are actin-binding. 3 IQ domains span residues 824–851 (LDRS…RDAS), 872–901 (RTHS…ASLQ), and 943–972 (KLRG…EARS). Residues 973–1812 (LRTVQEQKNK…NYHMLEDRME (840 aa)) adopt a coiled-coil conformation. Residues 1504–1524 (KKQLTQLQQQHEQSSTQLLLA) are disordered. Residues 1506–1523 (QLTQLQQQHEQSSTQLLL) show a composition bias toward low complexity. The Dilute domain maps to 1969–2188 (IDFIDQLQQS…IASICPPNKS (220 aa)).

The protein belongs to the TRAFAC class myosin-kinesin ATPase superfamily. Myosin family. Homodimer that associates with six light chains.

It localises to the contractile vacuole. Functionally, processive motor protein that can move over long distances along F-actin without disassociating; processiveness depends on high physiological Mg(2+) concentrations. Presents a high actin affinity in the presence of ADP, fast ATP hydrolysis, and a high steady-state ATPase activity in the presence of actin that is rate limited by ADP release. Physiological decrease of free Mg(2+) ions leads to an increased rate of ADP release and shortening of the fraction of time it spends in the strong acting binding states. In Dictyostelium discoideum (Social amoeba), this protein is Myosin-J heavy chain (myoJ).